Reading from the N-terminus, the 715-residue chain is Fatty acid oxidation complex subunit alpha (715 aa).

An enoyl-CoA hydratase/isomerase region spans residues 1 to 190 (MIYEGKAITV…KVSAVDAVVT (190 aa)). Residue Asp-297 coordinates substrate. Residues 312 to 715 (KDVKQAAVLG…MAKNGQSFFG (404 aa)) are 3-hydroxyacyl-CoA dehydrogenase. NAD(+) is bound by residues Met-325, Asp-344, 401 to 403 (VVE), Lys-408, and Ser-430. His-451 acts as the For 3-hydroxyacyl-CoA dehydrogenase activity in catalysis. Residue Asn-454 coordinates NAD(+). Substrate is bound by residues Asn-501 and Tyr-660.

It in the N-terminal section; belongs to the enoyl-CoA hydratase/isomerase family. This sequence in the C-terminal section; belongs to the 3-hydroxyacyl-CoA dehydrogenase family. In terms of assembly, heterotetramer of two alpha chains (FadB) and two beta chains (FadA).

The catalysed reaction is a (3S)-3-hydroxyacyl-CoA + NAD(+) = a 3-oxoacyl-CoA + NADH + H(+). The enzyme catalyses a (3S)-3-hydroxyacyl-CoA = a (2E)-enoyl-CoA + H2O. It carries out the reaction a 4-saturated-(3S)-3-hydroxyacyl-CoA = a (3E)-enoyl-CoA + H2O. It catalyses the reaction (3S)-3-hydroxybutanoyl-CoA = (3R)-3-hydroxybutanoyl-CoA. The catalysed reaction is a (3Z)-enoyl-CoA = a 4-saturated (2E)-enoyl-CoA. The enzyme catalyses a (3E)-enoyl-CoA = a 4-saturated (2E)-enoyl-CoA. It functions in the pathway lipid metabolism; fatty acid beta-oxidation. Functionally, involved in the aerobic and anaerobic degradation of long-chain fatty acids via beta-oxidation cycle. Catalyzes the formation of 3-oxoacyl-CoA from enoyl-CoA via L-3-hydroxyacyl-CoA. It can also use D-3-hydroxyacyl-CoA and cis-3-enoyl-CoA as substrate. The protein is Fatty acid oxidation complex subunit alpha of Pseudomonas fragi.